A 266-amino-acid polypeptide reads, in one-letter code: 15-hydroxyprostaglandin dehydrogenase [NAD(+)] (266 aa).

Residues 12–20 (GAAQGIGRA), 36–37 (DW), 63–65 (CDV), and Asn91 contribute to the NAD(+) site. Positions 138 and 148 each coordinate substrate. Tyr151 acts as the Proton acceptor in catalysis. NAD(+)-binding positions include 151 to 155 (YCASK) and 186 to 188 (VNT).

This sequence belongs to the short-chain dehydrogenases/reductases (SDR) family. In terms of assembly, homodimer.

It is found in the cytoplasm. It catalyses the reaction prostaglandin E2 + NAD(+) = 15-oxoprostaglandin E2 + NADH + H(+). The catalysed reaction is (15S)-hydroxy-(5Z,8Z,11Z,13E)-eicosatetraenoate + NAD(+) = 15-oxo-(5Z,8Z,11Z,13E)-eicosatetraenoate + NADH + H(+). It carries out the reaction (11R)-hydroxy-(5Z,8Z,12E,14Z)-eicosatetraenoate + NAD(+) = 11-oxo-(5Z,8Z,12E,14Z)-eicosatetraenoate + NADH + H(+). The enzyme catalyses lipoxin A4 + NAD(+) = 15-oxo-(5S,6R)-dihydroxy-(7E,9E,11Z,13E)-eicosatetraenoate + NADH + H(+). It catalyses the reaction 15-oxo-(5S,6R)-dihydroxy-(7E,9E,11Z)-eicosatrienoate + NADH + H(+) = (5S,6R,15S)-trihydroxy-(7E,9E,11Z)-eicosatrienoate + NAD(+). The catalysed reaction is prostaglandin A1 + NAD(+) = 15-oxo-prostaglandin A1 + NADH + H(+). It carries out the reaction prostaglandin E1 + NAD(+) = 15-oxoprostaglandin E1 + NADH + H(+). The enzyme catalyses 14-hydroxy-(4Z,7Z,10Z,12E,16Z,19Z)-docosahexaenoate + NAD(+) = 14-oxo-(4Z,7Z,10Z,12E,16Z,19Z)-docosahexaenoate + NADH + H(+). It catalyses the reaction resolvin E1 + NAD(+) = 18-oxo-resolvin E1 + NADH + H(+). The catalysed reaction is resolvin D1 + NAD(+) = 8-oxoresolvin D1 + NADH + H(+). It carries out the reaction resolvin D1 + NAD(+) = 17-oxoresolvin D1 + NADH + H(+). The enzyme catalyses resolvin D2 + NAD(+) = 7-oxoresolvin D2 + NADH + H(+). It catalyses the reaction resolvin D2 + NAD(+) = 16-oxoresolvin D2 + NADH + H(+). Its function is as follows. Catalyzes the NAD-dependent dehydrogenation (oxidation) of a broad array of hydroxylated polyunsaturated fatty acids (mainly eicosanoids and docosanoids, including prostaglandins, lipoxins and resolvins), yielding their corresponding keto (oxo) metabolites. Decreases the levels of the pro-proliferative prostaglandins such as prostaglandin E2 (whose activity is increased in cancer because of an increase in the expression of cyclooxygenase 2) and generates oxo-fatty acid products that can profoundly influence cell function by abrogating pro-inflammatory cytokine expression. Converts resolvins E1, D1 and D2 to their oxo products, which represents a mode of resolvin inactivation. Resolvin E1 plays important roles during the resolution phase of acute inflammation, while resolvins D1 and D2 have a unique role in obesity-induced adipose inflammation. This Macaca fascicularis (Crab-eating macaque) protein is 15-hydroxyprostaglandin dehydrogenase [NAD(+)] (HPGD).